The primary structure comprises 422 residues: UDP-N-acetylglucosamine 1-carboxyvinyltransferase (422 aa).

22-23 is a phosphoenolpyruvate binding site; the sequence is KN. Arg94 provides a ligand contact to UDP-N-acetyl-alpha-D-glucosamine. The active-site Proton donor is the Cys118. Residue Cys118 is modified to 2-(S-cysteinyl)pyruvic acid O-phosphothioketal. Residues 123 to 127, Asp309, and Ile331 contribute to the UDP-N-acetyl-alpha-D-glucosamine site; that span reads RPVDL.

It belongs to the EPSP synthase family. MurA subfamily.

It localises to the cytoplasm. It carries out the reaction phosphoenolpyruvate + UDP-N-acetyl-alpha-D-glucosamine = UDP-N-acetyl-3-O-(1-carboxyvinyl)-alpha-D-glucosamine + phosphate. Its pathway is cell wall biogenesis; peptidoglycan biosynthesis. Functionally, cell wall formation. Adds enolpyruvyl to UDP-N-acetylglucosamine. The sequence is that of UDP-N-acetylglucosamine 1-carboxyvinyltransferase from Cereibacter sphaeroides (strain ATCC 17023 / DSM 158 / JCM 6121 / CCUG 31486 / LMG 2827 / NBRC 12203 / NCIMB 8253 / ATH 2.4.1.) (Rhodobacter sphaeroides).